A 180-amino-acid polypeptide reads, in one-letter code: Large ribosomal subunit protein uL5 (180 aa).

The protein belongs to the universal ribosomal protein uL5 family. As to quaternary structure, part of the 50S ribosomal subunit; part of the 5S rRNA/L5/L18/L25 subcomplex. Contacts the 5S rRNA and the P site tRNA. Forms a bridge to the 30S subunit in the 70S ribosome.

This is one of the proteins that bind and probably mediate the attachment of the 5S RNA into the large ribosomal subunit, where it forms part of the central protuberance. In the 70S ribosome it contacts protein S13 of the 30S subunit (bridge B1b), connecting the 2 subunits; this bridge is implicated in subunit movement. Contacts the P site tRNA; the 5S rRNA and some of its associated proteins might help stabilize positioning of ribosome-bound tRNAs. The chain is Large ribosomal subunit protein uL5 from Chlamydia trachomatis serovar A (strain ATCC VR-571B / DSM 19440 / HAR-13).